We begin with the raw amino-acid sequence, 317 residues long: UAP56-interacting factor (317 aa).

M1 bears the N-acetylmethionine mark. Residues 1–23 (MNRFGTRLVGATATTPPAPKARS) are disordered. Position 14 is a phosphothreonine (T14). Phosphoserine is present on S23. Residues 26 to 44 (NLDKIDMSLDEIIKLNRKE) carry the UAP56-binding motif motif. Residues S60 and S117 each carry the phosphoserine modification. A Glycyl lysine isopeptide (Lys-Gly) (interchain with G-Cter in SUMO1) cross-link involves residue K139. Residue K260 forms a Glycyl lysine isopeptide (Lys-Gly) (interchain with G-Cter in SUMO2) linkage.

The protein belongs to the UIF family. In terms of assembly, interacts with DDX39B/UAP56 and NXF1; interaction with DDX39B/UAP56 and NXF1 are mutually exclusive. Interacts with SSRP1; required for its recruitment to mRNAs. Interacts with CHTOP.

The protein localises to the nucleus. It localises to the nucleoplasm. Its subcellular location is the nucleus speckle. In terms of biological role, required for mRNA export from the nucleus to the cytoplasm. Acts as an adapter that uses the DDX39B/UAP56-NFX1 pathway to ensure efficient mRNA export and delivering to the nuclear pore. Associates with spliced and unspliced mRNAs simultaneously with ALYREF/THOC4. This is UAP56-interacting factor (Fyttd1) from Rattus norvegicus (Rat).